A 507-amino-acid polypeptide reads, in one-letter code: Maturase K (507 aa).

The protein belongs to the intron maturase 2 family. MatK subfamily.

Its subcellular location is the plastid. The protein localises to the chloroplast. Its function is as follows. Usually encoded in the trnK tRNA gene intron. Probably assists in splicing its own and other chloroplast group II introns. The polypeptide is Maturase K (Lens ervoides (Beaded lentil)).